A 32-amino-acid chain; its full sequence is Sodium channel neurotoxin BmK NT2 (32 aa).

One can recognise an LCN-type CS-alpha/beta domain in the interval 2 to 32 (RDAYIAKPENCVYHCAGNEGCNNLCTCNGAT).

As to expression, expressed by the venom gland.

The protein resides in the secreted. Its function is as follows. Alpha toxins bind voltage-independently at site-3 of sodium channels (Nav) and inhibit the inactivation of the activated channels, thereby blocking neuronal transmission. This toxin dose-dependently delays inactivation of voltage-gated sodium channels (Nav) (EC(50)=0.91 uM), and shifts the steady-state activation and inactivation to hyperpolarized direction. In addition, it dose-dependently alters calcium dynamics and increases phosphorylation of MAP kinases 1/3 (MAPK1/MAPK3) and cAMP-response element binding (CREB) proteins in neocortical neurons. This effect is eliminated by tetrodotoxin, a Nav blocker. This Olivierus martensii (Manchurian scorpion) protein is Sodium channel neurotoxin BmK NT2.